A 459-amino-acid chain; its full sequence is ATP-dependent protease ATPase subunit HslU (459 aa).

ATP contacts are provided by residues Val18, 60 to 65, Asp272, Glu337, and Arg409; that span reads GVGKTE.

It belongs to the ClpX chaperone family. HslU subfamily. In terms of assembly, a double ring-shaped homohexamer of HslV is capped on each side by a ring-shaped HslU homohexamer. The assembly of the HslU/HslV complex is dependent on binding of ATP.

It localises to the cytoplasm. In terms of biological role, ATPase subunit of a proteasome-like degradation complex; this subunit has chaperone activity. The binding of ATP and its subsequent hydrolysis by HslU are essential for unfolding of protein substrates subsequently hydrolyzed by HslV. HslU recognizes the N-terminal part of its protein substrates and unfolds these before they are guided to HslV for hydrolysis. In Thermoanaerobacter pseudethanolicus (strain ATCC 33223 / 39E) (Clostridium thermohydrosulfuricum), this protein is ATP-dependent protease ATPase subunit HslU.